The sequence spans 373 residues: tRNA-specific 2-thiouridylase MnmA (373 aa).

Residues 12 to 19 (GMSGGVDS) and Met38 each bind ATP. The interval 98–100 (NPD) is interaction with target base in tRNA. Cys103 acts as the Nucleophile in catalysis. A disulfide bridge connects residues Cys103 and Cys200. Gly127 serves as a coordination point for ATP. The tract at residues 150 to 152 (KDQ) is interaction with tRNA. Cys200 functions as the Cysteine persulfide intermediate in the catalytic mechanism. Positions 312–313 (RY) are interaction with tRNA.

It belongs to the MnmA/TRMU family.

The protein localises to the cytoplasm. It carries out the reaction S-sulfanyl-L-cysteinyl-[protein] + uridine(34) in tRNA + AH2 + ATP = 2-thiouridine(34) in tRNA + L-cysteinyl-[protein] + A + AMP + diphosphate + H(+). Functionally, catalyzes the 2-thiolation of uridine at the wobble position (U34) of tRNA, leading to the formation of s(2)U34. The polypeptide is tRNA-specific 2-thiouridylase MnmA (Streptococcus uberis (strain ATCC BAA-854 / 0140J)).